Consider the following 1049-residue polypeptide: Protein phosphatase 1 regulatory subunit 12A (1049 aa).

6 ANK repeats span residues 39 to 68, 72 to 101, 105 to 134, 138 to 164, 198 to 227, and 231 to 260; these read DDGA…DINY, DGLT…CINQ, EGWI…SVGV, EGET…RQGV, SGGT…DVNI, and DGWT…DMDV. The tract at residues 302–947 is disordered; that stretch reads LIETTTTGDN…RPYSRFEKDD (646 aa). Residues 303 to 315 are compositionally biased toward polar residues; it reads IETTTTGDNNQSV. The segment covering 319 to 341 has biased composition (basic and acidic residues); it reads KSKETLLLEPEKTAPRIETLEPE. Residues 359–371 show a composition bias toward acidic residues; sequence SEEEEEEDSESEN. Positions 378 to 421 are enriched in low complexity; the sequence is SSVPSSVSNSTPTTAPSSITVTSPTTPSNQVTTPTSPTKKVSTP. Residues 426–436 show a composition bias toward basic and acidic residues; sequence SPKEEDRKDES. The segment covering 473 to 484 has biased composition (low complexity); it reads RSASSPRLSSSL. A compositionally biased stretch (basic and acidic residues) spans 485–497; that stretch reads DNKDKEKEKEKTR. A compositionally biased stretch (polar residues) spans 545 to 564; the sequence is SDGTASTNRTSSYQRSTSHT. Positions 571–592 are enriched in low complexity; it reads SSSRDLPAKSSSASSLEPNNSK. Over residues 593–607 the composition is skewed to polar residues; it reads AWQPSSYYQSYSIHR. Residues 620–639 are compositionally biased toward low complexity; that stretch reads SSTSSSTTTTTTTSSVTSPT. Basic and acidic residues predominate over residues 649 to 664; that stretch reads WAEESAEKEKEKEKES. Low complexity predominate over residues 665-686; it reads ATVIPTINTAGTTTTTSTTGTV. Basic and acidic residues predominate over residues 702 to 711; sequence VRDEESESQR. A compositionally biased stretch (basic residues) spans 712–722; the sequence is KARSRQARQSR. Basic and acidic residues predominate over residues 747–789; it reads RPREDEKEEKEKQDKEKQEEKKETETKEDDYRSRYRSFEEKYR. Over residues 790 to 819 the composition is skewed to low complexity; sequence TSLASSTTASSTIPSSSSSSSSSLYSTSSL. Over residues 820–829 the composition is skewed to polar residues; sequence NRPNSLTGLT. The span at 835–863 shows a compositional bias: basic and acidic residues; sequence STRDTDRESDRKEKDEDRDGDDKSQPRSI. The segment covering 864 to 875 has biased composition (basic residues); that stretch reads RDRRRPREKRRS. Basic and acidic residues-rich tracts occupy residues 890 to 906 and 934 to 947; these read PDHP…EPQS and GESR…EKDD.

As to quaternary structure, PP1 comprises a catalytic subunit, and one or several targeting or regulatory subunits. Ppp1r12a mediates binding to myosin.

The protein resides in the cytoplasm. Regulates myosin phosphatase activity. The polypeptide is Protein phosphatase 1 regulatory subunit 12A (ppp1r12a) (Danio rerio (Zebrafish)).